Reading from the N-terminus, the 197-residue chain is CASP-like protein 1B2 (197 aa).

Alanine 2 bears the N-acetylalanine mark. Residues alanine 2 to lysine 17 lie on the Cytoplasmic side of the membrane. The chain crosses the membrane as a helical span at residues leucine 18–serine 38. Residues leucine 39–alanine 69 lie on the Extracellular side of the membrane. The chain crosses the membrane as a helical span at residues phenylalanine 70 to valine 90. Residues glutamine 91 to serine 106 lie on the Cytoplasmic side of the membrane. A helical membrane pass occupies residues isoleucine 107–phenylalanine 127. The Extracellular portion of the chain corresponds to valine 128–alanine 156. The helical transmembrane segment at glycine 157–isoleucine 177 threads the bilayer. Residues serine 178 to valine 197 are Cytoplasmic-facing.

It belongs to the Casparian strip membrane proteins (CASP) family. In terms of assembly, homodimer and heterodimers.

The protein resides in the cell membrane. In Arabidopsis thaliana (Mouse-ear cress), this protein is CASP-like protein 1B2.